A 505-amino-acid polypeptide reads, in one-letter code: 2,3-bisphosphoglycerate-independent phosphoglycerate mutase (505 aa).

2 residues coordinate Mn(2+): D15 and S65. Catalysis depends on S65, which acts as the Phosphoserine intermediate. Substrate is bound by residues H126, 156-157 (RD), R187, R193, 260-263 (RPDR), and K333. Mn(2+) is bound by residues D398, H402, D439, H440, and H457.

It belongs to the BPG-independent phosphoglycerate mutase family. Monomer. Mn(2+) serves as cofactor.

It carries out the reaction (2R)-2-phosphoglycerate = (2R)-3-phosphoglycerate. It participates in carbohydrate degradation; glycolysis; pyruvate from D-glyceraldehyde 3-phosphate: step 3/5. Catalyzes the interconversion of 2-phosphoglycerate and 3-phosphoglycerate. This Mycoplasmopsis pulmonis (strain UAB CTIP) (Mycoplasma pulmonis) protein is 2,3-bisphosphoglycerate-independent phosphoglycerate mutase.